Consider the following 153-residue polypeptide: Fucose mutarotase (153 aa).

His-24 functions as the Proton donor in the catalytic mechanism. Asp-32 lines the substrate pocket. Asp-69 is a catalytic residue. Substrate is bound by residues Met-79, Tyr-120, Tyr-138, and Asn-140. Residue Tyr-120 is part of the active site.

Belongs to the RbsD / FucU family. As to quaternary structure, mainly homodimer, but also exists as homotetramer, homooctamer, and homodecamer. The homodimeric form seems catalytically inactive. In terms of tissue distribution, widely expressed in various tissues and cell lines, including kidney, liver, and pancreas, marginally in muscle and testis.

The catalysed reaction is alpha-L-fucose = beta-L-fucose. It functions in the pathway carbohydrate metabolism; L-fucose metabolism. Involved in the interconversion between alpha- and beta-L-fucoses. L-Fucose (6-deoxy-L-galactose) exists as alpha-L-fucose (29.5%) and beta-L-fucose (70.5%), the beta-form is metabolized through the salvage pathway. GDP-L-fucose formed either by the de novo or salvage pathways is transported into the endoplasmic reticulum, where it serves as a substrate for N- and O-glycosylations by fucosyltransferases. Fucosylated structures expressed on cell surfaces or secreted in biological fluids are believed to play a critical role in cell-cell adhesion and recognition processes. In Mus musculus (Mouse), this protein is Fucose mutarotase (Fuom).